Consider the following 189-residue polypeptide: uncharacterized protein (189 aa).

An N-terminal signal peptide occupies residues 1–23 (MVPPKPALWALLLALLGTAPSRA). An N-linked (GlcNAc...) asparagine glycan is attached at asparagine 72.

This is an uncharacterized protein from Homo sapiens (Human).